The following is a 92-amino-acid chain: DNA-directed RNA polymerase subunit Rpo11 (92 aa).

The protein belongs to the archaeal Rpo11/eukaryotic RPB11/RPC19 RNA polymerase subunit family. As to quaternary structure, part of the RNA polymerase complex.

The protein resides in the cytoplasm. It catalyses the reaction RNA(n) + a ribonucleoside 5'-triphosphate = RNA(n+1) + diphosphate. DNA-dependent RNA polymerase (RNAP) catalyzes the transcription of DNA into RNA using the four ribonucleoside triphosphates as substrates. The polypeptide is DNA-directed RNA polymerase subunit Rpo11 (Pyrobaculum aerophilum (strain ATCC 51768 / DSM 7523 / JCM 9630 / CIP 104966 / NBRC 100827 / IM2)).